The following is a 345-amino-acid chain: MGDQIVVLGSGIIGLYTTYCLIYEAGCAPAKITIVAEFLPGDQSTLYTSPWAGGNFSCISPADDTTLAYDKFTYLNLFKIHKKLGGPECGLDNKPSTEYWDFYPGDEKVNSLKQYLKDFKVIPKSELPEGVEYGISYTTWNFNCPVFLQNMANFLNKRNVTIIRKHLTHISQAYLTVNTKVVFNCTGIGAADLGGVKDEKVYPTRGQVVVVRAPHIQENKMRWGKDYATYIIPRPYSNGELVLGGFLQKDNWTGNTFGFETDDIVSRTTSLLPKILDEPLHIIRVAAGLRPSRHGGPRIEAEVCEEGKLTIHNYGASGYGYQAGYGMSYEAVKLLVDNQKVKAKL.

Ser-10, Ile-13, Ser-49, Gly-53, and Asn-55 together coordinate FAD. Tyr-230 and Arg-290 together coordinate (R)-lactate. Residues Tyr-230 and Arg-290 each contribute to the anthranilate site. Residues Arg-290, Ser-317, Gly-320, Tyr-321, and Gln-322 each contribute to the FAD site. The Microbody targeting signal signature appears at 343–345 (AKL).

It belongs to the DAMOX/DASOX family. FAD serves as cofactor.

The protein localises to the peroxisome matrix. It carries out the reaction a D-alpha-amino acid + O2 + H2O = a 2-oxocarboxylate + H2O2 + NH4(+). The catalysed reaction is D-methionine + O2 + H2O = 4-methylsulfanyl-2-oxobutanoate + H2O2 + NH4(+). Catalyzes the oxidative deamination of D-amino acids with broad substrate specificity. Enables the organism to utilize D-amino acids as a source of nutrients. Enables the organism to utilize D-alanine as a nitrogen source, although it is not strictly required for this process. Also enables utilization of D-alanine as a carbon source. This is D-amino-acid oxidase from Candida boidinii (Yeast).